The chain runs to 158 residues: Endoribonuclease YbeY (158 aa).

The Zn(2+) site is built by histidine 119, histidine 123, and aspartate 129.

It belongs to the endoribonuclease YbeY family. The cofactor is Zn(2+).

It is found in the cytoplasm. Functionally, single strand-specific metallo-endoribonuclease involved in late-stage 70S ribosome quality control and in maturation of the 3' terminus of the 16S rRNA. The protein is Endoribonuclease YbeY of Chlamydia caviae (strain ATCC VR-813 / DSM 19441 / 03DC25 / GPIC) (Chlamydophila caviae).